The following is a 316-amino-acid chain: 4-hydroxy-3-methylbut-2-enyl diphosphate reductase (316 aa).

Cysteine 12 is a binding site for [4Fe-4S] cluster. Residues histidine 41 and histidine 74 each contribute to the (2E)-4-hydroxy-3-methylbut-2-enyl diphosphate site. Dimethylallyl diphosphate contacts are provided by histidine 41 and histidine 74. 2 residues coordinate isopentenyl diphosphate: histidine 41 and histidine 74. A [4Fe-4S] cluster-binding site is contributed by cysteine 96. Histidine 124 contacts (2E)-4-hydroxy-3-methylbut-2-enyl diphosphate. Histidine 124 is a dimethylallyl diphosphate binding site. Histidine 124 serves as a coordination point for isopentenyl diphosphate. Glutamate 126 serves as the catalytic Proton donor. Threonine 167 contacts (2E)-4-hydroxy-3-methylbut-2-enyl diphosphate. Cysteine 197 contributes to the [4Fe-4S] cluster binding site. Positions 225, 226, 227, and 269 each coordinate (2E)-4-hydroxy-3-methylbut-2-enyl diphosphate. Residues serine 225, serine 226, asparagine 227, and serine 269 each coordinate dimethylallyl diphosphate. Isopentenyl diphosphate is bound by residues serine 225, serine 226, asparagine 227, and serine 269.

The protein belongs to the IspH family. In terms of assembly, homodimer. The cofactor is [4Fe-4S] cluster.

The catalysed reaction is isopentenyl diphosphate + 2 oxidized [2Fe-2S]-[ferredoxin] + H2O = (2E)-4-hydroxy-3-methylbut-2-enyl diphosphate + 2 reduced [2Fe-2S]-[ferredoxin] + 2 H(+). It catalyses the reaction dimethylallyl diphosphate + 2 oxidized [2Fe-2S]-[ferredoxin] + H2O = (2E)-4-hydroxy-3-methylbut-2-enyl diphosphate + 2 reduced [2Fe-2S]-[ferredoxin] + 2 H(+). It participates in isoprenoid biosynthesis; dimethylallyl diphosphate biosynthesis; dimethylallyl diphosphate from (2E)-4-hydroxy-3-methylbutenyl diphosphate: step 1/1. Its pathway is isoprenoid biosynthesis; isopentenyl diphosphate biosynthesis via DXP pathway; isopentenyl diphosphate from 1-deoxy-D-xylulose 5-phosphate: step 6/6. Functionally, catalyzes the conversion of 1-hydroxy-2-methyl-2-(E)-butenyl 4-diphosphate (HMBPP) into a mixture of isopentenyl diphosphate (IPP) and dimethylallyl diphosphate (DMAPP). Acts in the terminal step of the DOXP/MEP pathway for isoprenoid precursor biosynthesis. In Escherichia coli (strain UTI89 / UPEC), this protein is 4-hydroxy-3-methylbut-2-enyl diphosphate reductase.